The sequence spans 300 residues: Ribosomal RNA small subunit methyltransferase H (300 aa).

S-adenosyl-L-methionine-binding positions include 43–45 (AGH), aspartate 60, aspartate 105, and glutamine 112.

Belongs to the methyltransferase superfamily. RsmH family.

It localises to the cytoplasm. It catalyses the reaction cytidine(1402) in 16S rRNA + S-adenosyl-L-methionine = N(4)-methylcytidine(1402) in 16S rRNA + S-adenosyl-L-homocysteine + H(+). Specifically methylates the N4 position of cytidine in position 1402 (C1402) of 16S rRNA. The polypeptide is Ribosomal RNA small subunit methyltransferase H (Deinococcus deserti (strain DSM 17065 / CIP 109153 / LMG 22923 / VCD115)).